Reading from the N-terminus, the 644-residue chain is Exoribonuclease 2 (644 aa).

Residues 189–516 (REDLTALDFV…NHRLLKAVIK (328 aa)) enclose the RNB domain. Residues 561-643 (DTRFAAEIVD…ETRSIIARPV (83 aa)) form the S1 motif domain.

Belongs to the RNR ribonuclease family. RNase II subfamily.

It localises to the cytoplasm. The catalysed reaction is Exonucleolytic cleavage in the 3'- to 5'-direction to yield nucleoside 5'-phosphates.. Involved in mRNA degradation. Hydrolyzes single-stranded polyribonucleotides processively in the 3' to 5' direction. This is Exoribonuclease 2 from Shigella dysenteriae serotype 1 (strain Sd197).